The sequence spans 148 residues: Large ribosomal subunit protein bL9 (148 aa).

Belongs to the bacterial ribosomal protein bL9 family.

Binds to the 23S rRNA. This Syntrophotalea carbinolica (strain DSM 2380 / NBRC 103641 / GraBd1) (Pelobacter carbinolicus) protein is Large ribosomal subunit protein bL9.